Consider the following 128-residue polypeptide: uncharacterized protein (128 aa).

A run of 2 helical transmembrane segments spans residues 45 to 65 (GYFHWSLITQNYIIFLFLFPF) and 95 to 115 (FMSHIPVLTVISYCVCCLSCF).

Its subcellular location is the membrane. This is an uncharacterized protein from Saccharomyces cerevisiae (strain ATCC 204508 / S288c) (Baker's yeast).